Consider the following 394-residue polypeptide: Protein arginine N-methyltransferase 8 (394 aa).

Gly-2 carries N-myristoyl glycine lipidation. The interval 21–40 (VESTEVSSAPPQPPQPVIPA) is disordered. 2 short sequence motifs (SH3-binding) span residues 29-42 (APPQ…PAKP) and 53-58 (PSCPGR). Pro residues predominate over residues 30 to 39 (PPQPPQPVIP). An Omega-N-methylarginine; by PRMT8 modification is found at Arg-58. Asymmetric dimethylarginine; by PRMT8 is present on Arg-73. The 322-residue stretch at 73–394 (RDYYFDSYAH…TSVSNDYKMR (322 aa)) folds into the SAM-dependent MTase PRMT-type domain. S-adenosyl-L-methionine-binding positions include His-86, Arg-95, Gly-119, 119–122 (GSGT), Glu-141, and Glu-170. Residues Glu-185 and Glu-194 contribute to the active site.

Belongs to the class I-like SAM-binding methyltransferase superfamily. Protein arginine N-methyltransferase family. PRMT8 subfamily. As to quaternary structure, homodimer. Tetramer; individual homodimers associates to form a homotetramer. Homooctamer; individual homodimers associates to form a homooctamer and homooligomerization is required for proper localization to the cell membrane. Heterodimer with PRMT1; heterodimerization may recruit PRMT1 activity to the plasma membrane. Interacts with PRMT2 (via the SH3 domain). Interacts with FYN (via the SH3 domain). Interacts with EWS; independently of EWS methylation status. As to expression, brain-specific. Only expressed in neurons, especially in the somatosensory and limbic systems, and a part of motor system. Highly expressed in all of the regions related to general somatosensory system. Expressed in most of the relay nuclei intervening the special somatosensory system, such as the auditory, visual and vestibular systems. Also present in forebrain limbic areas and thalamic nuclei relevant to limbic areas and in areas related to the motor system, such as the caudate putamen, Purkinje cells, inferior olivary nucleus and cerebellar nuclei.

The protein localises to the cell membrane. It carries out the reaction L-arginyl-[protein] + S-adenosyl-L-methionine = N(omega)-methyl-L-arginyl-[protein] + S-adenosyl-L-homocysteine + H(+). The catalysed reaction is L-arginyl-[protein] + 2 S-adenosyl-L-methionine = N(omega),N(omega)-dimethyl-L-arginyl-[protein] + 2 S-adenosyl-L-homocysteine + 2 H(+). S-adenosyl-L-methionine-dependent and membrane-associated arginine methyltransferase that can both catalyze the formation of omega-N monomethylarginine (MMA) and asymmetrical dimethylarginine (aDMA) in proteins such as NIFK, myelin basic protein, histone H4, H2A and H2A/H2B dimer. Able to mono- and dimethylate EWS protein; however its precise role toward EWS remains unclear as it still interacts with fully methylated EWS. This chain is Protein arginine N-methyltransferase 8, found in Mus musculus (Mouse).